The primary structure comprises 160 residues: Ribosomal RNA large subunit methyltransferase H (160 aa).

S-adenosyl-L-methionine is bound by residues Leu76, Gly108, and 127–132; that span reads LGKMTW.

This sequence belongs to the RNA methyltransferase RlmH family. Homodimer.

The protein resides in the cytoplasm. It catalyses the reaction pseudouridine(1915) in 23S rRNA + S-adenosyl-L-methionine = N(3)-methylpseudouridine(1915) in 23S rRNA + S-adenosyl-L-homocysteine + H(+). Functionally, specifically methylates the pseudouridine at position 1915 (m3Psi1915) in 23S rRNA. The protein is Ribosomal RNA large subunit methyltransferase H of Sinorhizobium fredii (strain NBRC 101917 / NGR234).